The chain runs to 219 residues: ATP-dependent Clp protease proteolytic subunit 4 (219 aa).

The active-site Nucleophile is Ser-125. His-150 is a catalytic residue.

It belongs to the peptidase S14 family. In terms of assembly, fourteen ClpP subunits assemble into 2 heptameric rings which stack back to back to give a disk-like structure with a central cavity, resembling the structure of eukaryotic proteasomes.

The protein resides in the cytoplasm. It carries out the reaction Hydrolysis of proteins to small peptides in the presence of ATP and magnesium. alpha-casein is the usual test substrate. In the absence of ATP, only oligopeptides shorter than five residues are hydrolyzed (such as succinyl-Leu-Tyr-|-NHMec, and Leu-Tyr-Leu-|-Tyr-Trp, in which cleavage of the -Tyr-|-Leu- and -Tyr-|-Trp bonds also occurs).. Cleaves peptides in various proteins in a process that requires ATP hydrolysis. Has a chymotrypsin-like activity. Plays a major role in the degradation of misfolded proteins. This chain is ATP-dependent Clp protease proteolytic subunit 4, found in Prochlorococcus marinus (strain MIT 9312).